The chain runs to 70 residues: U-actitoxin-Ael2c (70 aa).

Positions 1–21 are cleaved as a signal peptide; that stretch reads SYQRFLFLVVVASLIATSLAI. Residues 22 to 26 constitute a propeptide that is removed on maturation; the sequence is PKDLE. 3 disulfide bridges follow: cysteine 32/cysteine 65, cysteine 34/cysteine 58, and cysteine 48/cysteine 66.

This sequence belongs to the sea anemone type 3 (BDS) potassium channel toxin family.

The protein resides in the secreted. It is found in the nematocyst. Functionally, potently and selectively inhibits voltage-gated potassium channels Kv11/KCNH/ERG. Acts as a gating-modifier toxin that shifts the voltage-dependence of ERG activation in the positive direction and suppresses its current amplitudes elicited by strong depolarizing pulses that maximally activate the channels. The sequence is that of U-actitoxin-Ael2c from Anthopleura elegantissima (Green aggregating anemone).